The primary structure comprises 201 residues: Probable GTP-binding protein EngB (201 aa).

Residues 22 to 197 (TFPEYAFIGR…LNYIESINKE (176 aa)) form the EngB-type G domain. Residues 30–37 (GRSNVGKS), 57–61 (GKTML), 75–78 (DLPG), 142–145 (TKAD), and 175–178 (ITSS) each bind GTP. Serine 37 and threonine 59 together coordinate Mg(2+).

It belongs to the TRAFAC class TrmE-Era-EngA-EngB-Septin-like GTPase superfamily. EngB GTPase family. Mg(2+) is required as a cofactor.

Necessary for normal cell division and for the maintenance of normal septation. The polypeptide is Probable GTP-binding protein EngB (Bacteroides fragilis (strain YCH46)).